Here is a 252-residue protein sequence, read N- to C-terminus: Putative teichuronic acid biosynthesis glycosyltransferase TuaG (252 aa).

The protein belongs to the glycosyltransferase 2 family.

The protein operates within cell wall biogenesis; teichuronic acid biosynthesis. This is Putative teichuronic acid biosynthesis glycosyltransferase TuaG (tuaG) from Bacillus subtilis (strain 168).